A 685-amino-acid chain; its full sequence is Probable glucan endo-1,3-beta-glucosidase btgC (685 aa).

Disordered regions lie at residues 1–96, 119–168, and 180–202; these read MSGP…NLGP, GIDA…RDSY, and PAGQ…SPYQ. At 1–312 the chain is on the cytoplasmic side; the sequence is MSGPHRSFSF…PTPGGGSRKR (312 aa). Polar residues-rich tracts occupy residues 47–61 and 73–90; these read SARS…SSGF and GQNS…TTPG. The chain crosses the membrane as a helical; Signal-anchor for type II membrane protein span at residues 313–333; the sequence is GWIVGLALAFIVVGAIVGGAV. The Extracellular segment spans residues 334–685; sequence GGTLGNRENE…IPDCGGKTAA (352 aa). Positions 335–369 are disordered; sequence GTLGNRENEAPDTTKSASSDTESNGDLNKDSSEIK. The span at 345–360 shows a compositional bias: polar residues; sequence PDTTKSASSDTESNGD. 3 N-linked (GlcNAc...) asparagine glycosylation sites follow: N405, N428, and N456. The active-site Proton donor is E488. Catalysis depends on E587, which acts as the Nucleophile. N632 carries an N-linked (GlcNAc...) asparagine glycan.

It belongs to the glycosyl hydrolase 17 family.

Its subcellular location is the cell membrane. It carries out the reaction Hydrolysis of (1-&gt;3)-beta-D-glucosidic linkages in (1-&gt;3)-beta-D-glucans.. Functionally, glucanases play a role in cell expansion during growth, in cell-cell fusion during mating, and in spore release during sporulation. This enzyme may be involved in beta-glucan degradation. Active on laminarin and lichenan. The chain is Probable glucan endo-1,3-beta-glucosidase btgC (btgC) from Aspergillus oryzae (strain ATCC 42149 / RIB 40) (Yellow koji mold).